The sequence spans 87 residues: MKTFEDLFAELSAKAARRPEGSKTVAELDAGVHGIGKKVVEEAAEVWMACEYESDAEAAEEISQLLYHVQVMMIAKGMSLEDVYTHL.

The protein belongs to the PRA-PH family.

It is found in the cytoplasm. It catalyses the reaction 1-(5-phospho-beta-D-ribosyl)-ATP + H2O = 1-(5-phospho-beta-D-ribosyl)-5'-AMP + diphosphate + H(+). It participates in amino-acid biosynthesis; L-histidine biosynthesis; L-histidine from 5-phospho-alpha-D-ribose 1-diphosphate: step 2/9. The chain is Phosphoribosyl-ATP pyrophosphatase from Kocuria rhizophila (strain ATCC 9341 / DSM 348 / NBRC 103217 / DC2201).